A 548-amino-acid chain; its full sequence is Synaptic vesicle 2-related protein (548 aa).

At 1–87 (MEEDLFQLRQ…GFGKFQWKLS (87 aa)) the chain is on the cytoplasmic side. Ser-25 and Ser-31 each carry phosphoserine. The helical transmembrane segment at 88–108 (VLTGLAWMADAMEMMILSILA) threads the bilayer. The Vesicular segment spans residues 109 to 122 (PQLHCEWRLPSWQV). Residues 123–143 (ALLTSVVFVGMMSSSTLWGNI) form a helical membrane-spanning segment. The Cytoplasmic portion of the chain corresponds to 144 to 156 (SDQYGRKTGLKIS). Residues 157 to 177 (VLWTLYYGILSAFAPVYSWIL) form a helical membrane-spanning segment. The Vesicular portion of the chain corresponds to 178–180 (VLR). Residues 181–201 (GLVGFGIGGVPQSVTLYAEFL) form a helical membrane-spanning segment. Residues 202–209 (PMKARAKC) lie on the Cytoplasmic side of the membrane. The chain crosses the membrane as a helical span at residues 210-230 (ILLIEVFWAIGTVFEVVLAVF). Residues 231-238 (VMPSLGWR) are Vesicular-facing. The helical transmembrane segment at 239-259 (WLLILSAVPLLLFAVLCFWLP) threads the bilayer. The Cytoplasmic segment spans residues 260 to 316 (ESARYDVLSGNQEKAIATLKRIATENGAPMPLGKLIISRQEDRGKMRDLFTPHFRWT). Residues 317-337 (TLLLWFIWFSNAFSYYGLVLL) form a helical membrane-spanning segment. The Vesicular segment spans residues 338–373 (TTELFQAGDVCGISSRKKAVEAKCSLACEYLSEEDY). A helical membrane pass occupies residues 374–394 (MDLLWTTLSEFPGVLVTLWII). Residues 395–401 (DRLGRKK) lie on the Cytoplasmic side of the membrane. A helical membrane pass occupies residues 402–422 (TMALCFVIFSFCSLLLFICVG). Residues 423–424 (RN) are Vesicular-facing. A helical transmembrane segment spans residues 425–445 (VLTLLLFIARAFISGGFQAAY). Topologically, residues 446 to 457 (VYTPEVYPTATR) are cytoplasmic. Residues 458–478 (ALGLGTCSGMARVGALITPFI) traverse the membrane as a helical segment. Residues 479–489 (AQVMLESSVYL) lie on the Vesicular side of the membrane. A helical membrane pass occupies residues 490 to 510 (TLAVYSGCCLLAALASCFLPI). Residues 511–548 (ETKGRGLQESSHREWGQEMVGRGMHGADVTRSNSGSQE) are Cytoplasmic-facing. Ser-542 bears the Phosphoserine mark.

It belongs to the major facilitator superfamily.

The protein resides in the cytoplasmic vesicle. It is found in the secretory vesicle. The protein localises to the synaptic vesicle membrane. This is Synaptic vesicle 2-related protein (SVOP) from Pongo abelii (Sumatran orangutan).